Here is a 415-residue protein sequence, read N- to C-terminus: Beta-1,4-glucuronyltransferase 1 (415 aa).

Over 1–8 (MQMSYAIR) the chain is Cytoplasmic. Residues 9-36 (CAFYQLLLAALMLVAMLQLLYLSLLSGL) traverse the membrane as a helical; Signal-anchor for type II membrane protein segment. The Lumenal portion of the chain corresponds to 37–415 (HGQEEQDQYF…AKYPDSPRHC (379 aa)). N204 carries an N-linked (GlcNAc...) asparagine glycan. 2 residues coordinate Mn(2+): D227 and D229. N300 carries an N-linked (GlcNAc...) asparagine glycan.

The protein belongs to the glycosyltransferase 49 family. As to quaternary structure, interacts with LARGE1 and LARGE2. The cofactor is Mn(2+).

It localises to the golgi apparatus membrane. It catalyses the reaction 3-O-[beta-D-Xyl-(1-&gt;4)-Rib-ol-P-Rib-ol-P-3-beta-D-GalNAc-(1-&gt;3)-beta-D-GlcNAc-(1-&gt;4)-(O-6-P-alpha-D-Man)]-Thr-[protein] + UDP-alpha-D-glucuronate = 3-O-[beta-D-GlcA-(1-&gt;3)-beta-D-Xyl-(1-&gt;4)-Rib-ol-P-Rib-ol-P-3-beta-D-GalNAc-(1-&gt;3)-beta-D-GlcNAc-(1-&gt;4)-(O-6-P-alpha-D-Man)]-Thr-[protein] + UDP + H(+). The protein operates within protein modification; protein glycosylation. Beta-1,4-glucuronyltransferase involved in O-mannosylation of alpha-dystroglycan (DAG1). Transfers a glucuronic acid (GlcA) residue onto a xylose (Xyl) acceptor to produce the glucuronyl-beta-1,4-xylose-beta disaccharide primer, which is further elongated by LARGE1, during synthesis of phosphorylated O-mannosyl glycan. Phosphorylated O-mannosyl glycan is a carbohydrate structure present in alpha-dystroglycan (DAG1), which is required for binding laminin G-like domain-containing extracellular proteins with high affinity. Required for axon guidance; via its function in O-mannosylation of alpha-dystroglycan (DAG1). The protein is Beta-1,4-glucuronyltransferase 1 of Bos taurus (Bovine).